The sequence spans 328 residues: DNA-directed RNA polymerase subunit alpha (328 aa).

Residues 1–231 (MQTNLLKPKA…EQLAVFAQLE (231 aa)) are alpha N-terminal domain (alpha-NTD). The tract at residues 248-328 (FDPILLRPVD…NWPPQGLDKR (81 aa)) is alpha C-terminal domain (alpha-CTD).

The protein belongs to the RNA polymerase alpha chain family. As to quaternary structure, homodimer. The RNAP catalytic core consists of 2 alpha, 1 beta, 1 beta' and 1 omega subunit. When a sigma factor is associated with the core the holoenzyme is formed, which can initiate transcription.

The enzyme catalyses RNA(n) + a ribonucleoside 5'-triphosphate = RNA(n+1) + diphosphate. Its function is as follows. DNA-dependent RNA polymerase catalyzes the transcription of DNA into RNA using the four ribonucleoside triphosphates as substrates. The protein is DNA-directed RNA polymerase subunit alpha of Leptothrix cholodnii (strain ATCC 51168 / LMG 8142 / SP-6) (Leptothrix discophora (strain SP-6)).